Consider the following 331-residue polypeptide: Calcium-binding and coiled-coil domain-containing protein 2 (331 aa).

A CLIR motif is present at residues 128 to 131; the sequence is IMVV. Positions 132–309 form a coiled coil; it reads INKEKVEEME…EKASWEKEKA (178 aa). The tract at residues 189–310 is disordered; that stretch reads KASWEKEKAS…KASWEKEKAP (122 aa). Residues 190–193 carry the LIR-like motif; it reads ASWE. An interaction with LGALS8 region spans residues 292 to 302; that stretch reads KEKASWEEEKA.

Belongs to the CALCOCO family. As to quaternary structure, dimer. Part of a complex consisting of CALCOCO2, TAX1BP1 and MYO6. Interacts with MYO6. Interacts with GEMIN4. Interacts with ATG8 family members MAP1LC3A, MAP1LC3B, GABARAP, GABARAPL1 and GABARAPL2. Interacts with ATG8 family member MAP1LC3C. Interacts with LGALS8. Interacts with TOM1; the interaction is indirect and is mediated by MYO6, which acts as a bridge between TOM1 and CALCOCO2. Interacts with AZI2.

The protein localises to the cytoplasm. Its subcellular location is the perinuclear region. The protein resides in the cytoskeleton. It localises to the cytoplasmic vesicle. It is found in the autophagosome membrane. Its function is as follows. Xenophagy-specific receptor required for autophagy-mediated intracellular bacteria degradation. Acts as an effector protein of galectin-sensed membrane damage that restricts the proliferation of infecting pathogens upon entry into the cytosol by targeting LGALS8-associated bacteria for autophagy. Initially orchestrates bacteria targeting to autophagosomes and subsequently ensures pathogen degradation by regulating pathogen-containing autophagosome maturation. Bacteria targeting to autophagosomes relies on its interaction with MAP1LC3A, MAP1LC3B and/or GABARAPL2, whereas regulation of pathogen-containing autophagosome maturation requires the interaction with MAP3LC3C. May play a role in ruffle formation and actin cytoskeleton organization and seems to negatively regulate constitutive secretion. The protein is Calcium-binding and coiled-coil domain-containing protein 2 of Mus musculus (Mouse).